The sequence spans 313 residues: Pyrimidine-specific ribonucleoside hydrolase RihB (313 aa).

The active-site Proton acceptor is Glu-11. The Ca(2+) site is built by Glu-11, Asp-16, and Val-124. Residues Gln-227 and His-239 each coordinate substrate. Asp-240 contributes to the Ca(2+) binding site.

It belongs to the IUNH family. RihB subfamily. Homotetramer. It depends on Ca(2+) as a cofactor.

It catalyses the reaction a pyrimidine ribonucleoside + H2O = a pyrimidine nucleobase + D-ribose. Functionally, hydrolyzes cytidine or uridine to ribose and cytosine or uracil, respectively. Has a clear preference for cytidine over uridine. Strictly specific for ribonucleosides. This is Pyrimidine-specific ribonucleoside hydrolase RihB from Shigella flexneri serotype 5b (strain 8401).